The sequence spans 89 residues: MATHKSAEKRSRQIEKRRIRNVSIRSKVKTYIKSVLTAIEAKDKEGAQSALQQAIPVIAKAGAKGVYHQKTASRHISRLTRKVNAQVAE.

It belongs to the bacterial ribosomal protein bS20 family.

In terms of biological role, binds directly to 16S ribosomal RNA. This Syntrophus aciditrophicus (strain SB) protein is Small ribosomal subunit protein bS20.